We begin with the raw amino-acid sequence, 220 residues long: Aspartic protease inhibitor 8 (220 aa).

Positions 1 to 23 (MMKCLFLLCLCLLPIVVFSSTFT) are cleaved as a signal peptide. A propeptide spanning residues 24–32 (SQNLIDLPS) is cleaved from the precursor. 2 disulfides stabilise this stretch: Cys80/Cys125 and Cys174/Cys185.

It belongs to the protease inhibitor I3 (leguminous Kunitz-type inhibitor) family.

The protein resides in the vacuole. Inhibitor of cathepsin D (aspartic protease) and trypsin (serine protease). May protect the plant by inhibiting proteases of invading organisms. This chain is Aspartic protease inhibitor 8, found in Solanum tuberosum (Potato).